Consider the following 142-residue polypeptide: FAD synthase (142 aa).

ATP is bound by residues 9–10, 14–17, and aspartate 92; these read TF and HPGH.

The protein belongs to the archaeal FAD synthase family. Homodimer. A divalent metal cation serves as cofactor.

The catalysed reaction is FMN + ATP + H(+) = FAD + diphosphate. It participates in cofactor biosynthesis; FAD biosynthesis; FAD from FMN: step 1/1. In terms of biological role, catalyzes the transfer of the AMP portion of ATP to flavin mononucleotide (FMN) to produce flavin adenine dinucleotide (FAD) coenzyme. This chain is FAD synthase, found in Halalkalicoccus jeotgali (strain DSM 18796 / CECT 7217 / JCM 14584 / KCTC 4019 / B3).